A 198-amino-acid polypeptide reads, in one-letter code: Pre-histone-like nucleoprotein (198 aa).

Position 2 is an N-acetylserine; by host (Ser-2). Positions 2 to 24 (SILISPSNNTGWGLRFPSKMFGG) are excised as a propeptide. The tract at residues 24-55 (GAKKRSDQHPVRVRGHYRAPWGAHKRGRTGRT) is disordered. Residues Lys-27 and Lys-48 each carry the N6-acetyllysine; by host modification. Positions 34-52 (VRVRGHYRAPWGAHKRGRT) are enriched in basic residues. Thr-55 and Thr-74 each carry phosphothreonine; by host. A phosphoserine; by host mark is found at Ser-183 and Ser-185. A Nuclear localization signal motif is present at residues 188-198 (RVPVRTRPPRN).

It belongs to the adenoviridae histone-like nucleoprotein family. In terms of assembly, interacts with the core-capsid bridging protein; this interaction bridges the virus core to the capsid. Interacts with host NPM1; this interaction might play a role in placing the pre-histone-like nucleoprotein on the viral DNA or regulating viral gene expression. Interacts with host HMGB1; this interaction inhibits host immune response. Cleaved near the N-terminus by the viral protease during virion maturation to form the mature protein.

It localises to the virion. Its subcellular location is the host nucleus. It is found in the host nucleolus. Plays a role in the inhibition of host immune response within the nucleus. Interacts with cellular nucleosomes and immobilizes the host immune danger signal HMGB1 on chromatin. In turn, prevents HMGB1 release out of the cell and thus decreases inflammation. Also plays a role in the wrapping and condensation of the viral DNA. May also promote viral genome import into the nucleus. This is Pre-histone-like nucleoprotein from Human adenovirus C serotype 2 (HAdV-2).